Here is a 558-residue protein sequence, read N- to C-terminus: Dihydroxy-acid dehydratase (558 aa).

C51 contacts [2Fe-2S] cluster. Mg(2+) is bound at residue D83. Position 124 (C124) interacts with [2Fe-2S] cluster. Mg(2+) is bound by residues D125 and K126. N6-carboxylysine is present on K126. C196 is a [2Fe-2S] cluster binding site. E447 is a binding site for Mg(2+). S473 acts as the Proton acceptor in catalysis.

Belongs to the IlvD/Edd family. In terms of assembly, homodimer. The cofactor is [2Fe-2S] cluster. Mg(2+) serves as cofactor.

It carries out the reaction (2R)-2,3-dihydroxy-3-methylbutanoate = 3-methyl-2-oxobutanoate + H2O. It catalyses the reaction (2R,3R)-2,3-dihydroxy-3-methylpentanoate = (S)-3-methyl-2-oxopentanoate + H2O. It functions in the pathway amino-acid biosynthesis; L-isoleucine biosynthesis; L-isoleucine from 2-oxobutanoate: step 3/4. Its pathway is amino-acid biosynthesis; L-valine biosynthesis; L-valine from pyruvate: step 3/4. Functionally, functions in the biosynthesis of branched-chain amino acids. Catalyzes the dehydration of (2R,3R)-2,3-dihydroxy-3-methylpentanoate (2,3-dihydroxy-3-methylvalerate) into 2-oxo-3-methylpentanoate (2-oxo-3-methylvalerate) and of (2R)-2,3-dihydroxy-3-methylbutanoate (2,3-dihydroxyisovalerate) into 2-oxo-3-methylbutanoate (2-oxoisovalerate), the penultimate precursor to L-isoleucine and L-valine, respectively. In Flavobacterium psychrophilum (strain ATCC 49511 / DSM 21280 / CIP 103535 / JIP02/86), this protein is Dihydroxy-acid dehydratase.